A 585-amino-acid chain; its full sequence is Optineurin (585 aa).

Residues 1 to 32 (MSHQPLSCLTEKGDSSCETPGNGPSNMVHPNL) are disordered. The segment covering 16 to 25 (SCETPGNGPS) has biased composition (polar residues). The stretch at 38–181 (EELLQQMKEL…VSELQLKLNS (144 aa)) forms a coiled coil. Positions 58–220 (MKLNNQAMKG…GPTRTDSISM (163 aa)) are interaction with Rab8. An LIR motif is present at residues 187-192 (DSFVEI). Phosphoserine is present on residues S188 and S209. Disordered stretches follow at residues 200–220 (EGAMKEMRNSAGPTRTDSISM) and 269–299 (FEKKANGHSAIETQTEGSTQKEEEDKDPESV). A coiled-coil region spans residues 244–512 (CLREGNQKVE…LLKENNDFED (269 aa)). S346 is modified (phosphoserine). An interaction with HD region spans residues 415–585 (TKQQAEKVDK…LQIHVMDCII (171 aa)). The tract at residues 416-525 (KQQAEKVDKV…RQSLMEMQCR (110 aa)) is interaction with MYO6. Residues 478 to 483 (DFHAER) carry the UBAN motif. A Phosphoserine modification is found at S531. The CCHC NOA-type zinc finger occupies 555–585 (PRSIPIHSCPKCGEVLPDIDTLQIHVMDCII). Residues C563, C566, H579, and C583 each coordinate Zn(2+).

Self-associates. Interacts with HD. Interacts with GTF3A. Interacts with MYO6. Interacts (via UBAN) with ubiquitinated TFRC. Interacts with GTP-bound Rab8 (RAB8A and/or RAB8B). Interacts with TBC1D17. Interacts with TBK1. Interacts with TRAF3. Binds to linear ubiquitin chains. Interacts with LC3 family members MAP1LC3A, MAP1LC3B, GABARAP, GABARAPL1 and GABARAPL2; OPTN phosphorylation increases the association (at least with MAP1LC3B). Interacts with RAB12; the interaction may be indirect. Interacts with TBK1; this interaction leads to the Golgi localization of TBK1 and its subsequent activation. Interacts with palmitoyltransferase ZDHHC17/HIP14; the interaction does not lead to palmitoylation of OPTN. Interacts with CYLD. Interacts with TOM1; the interaction is indirect and is mediated by MYO6, which acts as a bridge between TOM1 and OPTN. Interacts with USP12; the interaction is independent of USP12 deubiquitinase activity and may be involved in regulation of autophagic flux. Post-translationally, phosphorylated by TBK1, leading to restrict bacterial proliferation in case of infection.

The protein localises to the cytoplasm. It localises to the perinuclear region. Its subcellular location is the golgi apparatus. It is found in the trans-Golgi network. The protein resides in the cytoplasmic vesicle. The protein localises to the autophagosome. It localises to the recycling endosome. Functionally, plays an important role in the maintenance of the Golgi complex, in membrane trafficking, in exocytosis, through its interaction with myosin VI and Rab8. Links myosin VI to the Golgi complex and plays an important role in Golgi ribbon formation. Negatively regulates the induction of IFNB in response to RNA virus infection. Plays a neuroprotective role in the eye and optic nerve. Probably part of the TNF-alpha signaling pathway that can shift the equilibrium toward induction of cell death. May act by regulating membrane trafficking and cellular morphogenesis via a complex that contains Rab8 and huntingtin (HD). Mediates the interaction of Rab8 with the probable GTPase-activating protein TBC1D17 during Rab8-mediated endocytic trafficking, such as that of transferrin receptor (TFRC/TfR); regulates Rab8 recruitment to tubules emanating from the endocytic recycling compartment. Autophagy receptor that interacts directly with both the cargo to become degraded and an autophagy modifier of the MAP1 LC3 family; targets ubiquitin-coated bacteria (xenophagy) and appears to function in the same pathway as SQSTM1 and CALCOCO2/NDP52. The chain is Optineurin (Optn) from Rattus norvegicus (Rat).